A 455-amino-acid polypeptide reads, in one-letter code: La-related protein 6C (455 aa).

Over residues 1–20 the composition is skewed to basic and acidic residues; it reads MAQMQREEVESVTTEKKRLD. The segment at 1 to 29 is disordered; it reads MAQMQREEVESVTTEKKRLDGGGGSSGAQ. One can recognise an HTH La-type RNA-binding domain in the interval 138–229; the sequence is NLLSDDLRLK…KRTSQFTDRD (92 aa). An RRM domain is found at 236–324; the sequence is RTVVAENLPD…KGLRVRLLLR (89 aa). 2 disordered regions span residues 348-396 and 414-455; these read SYES…YAVG and SLGS…PNNL.

The protein localises to the nucleus. In terms of biological role, transcriptional regulator. The chain is La-related protein 6C (LARP6C) from Arabidopsis thaliana (Mouse-ear cress).